We begin with the raw amino-acid sequence, 268 residues long: MSRPEHIAPPEIFYNDVEAGKYSTNTRIQSIQTEMSERALELLDAEGPSFILDIGCGSGISTQIGESQGHVVVGMDISPSMLSVALESQEIEGDLLLCDMGTGVPFRPGTFDGVISISAIQWLLNADKTCNVPQRRLNRFFQTLYISMKRGGRAVMQYYPETEKSQQMIMDTARKAGFAGGIVVDHPESKRQKKYYLVLQAGGTRTLDISSMTLDQEGTNAKQRKLKKKQDMSTREYIIHKKELNRKRGRLHVPKDSKYSGRRRKAAF.

The disordered stretch occupies residues 246–268 (RKRGRLHVPKDSKYSGRRRKAAF).

Belongs to the class I-like SAM-binding methyltransferase superfamily. BUD23/WBSCR22 family.

The protein localises to the cytoplasm. Its subcellular location is the nucleus. The catalysed reaction is a guanosine in 18S rRNA + S-adenosyl-L-methionine = an N(7)-methylguanosine in 18S rRNA + S-adenosyl-L-homocysteine. Its function is as follows. S-adenosyl-L-methionine-dependent methyltransferase that specifically methylates the N(7) position of a guanine in 18S rRNA. Important for biogenesis end export of the 40S ribosomal subunit independent on its methyltransferase activity. The protein is 18S rRNA (guanine-N(7))-methyltransferase bud23 (bud23) of Schizosaccharomyces pombe (strain 972 / ATCC 24843) (Fission yeast).